The primary structure comprises 125 residues: Holo-[acyl-carrier-protein] synthase (125 aa).

Mg(2+) contacts are provided by D8 and E57.

It belongs to the P-Pant transferase superfamily. AcpS family. Requires Mg(2+) as cofactor.

Its subcellular location is the cytoplasm. The catalysed reaction is apo-[ACP] + CoA = holo-[ACP] + adenosine 3',5'-bisphosphate + H(+). Functionally, transfers the 4'-phosphopantetheine moiety from coenzyme A to a Ser of acyl-carrier-protein. The chain is Holo-[acyl-carrier-protein] synthase from Neisseria meningitidis serogroup C (strain 053442).